Here is an 816-residue protein sequence, read N- to C-terminus: Phosphatidylinositol 4-kinase beta (816 aa).

Disordered regions lie at residues 1–30 (MGDT…GSLL), 101–120 (EDEM…RRRR), and 248–318 (AHRK…SFSS). Glycine 2 is modified (N-acetylglycine). An interaction with ACBD3 region spans residues 2-68 (GDTVVEPAPL…VKLLHGGMAV (67 aa)). The PIK helical domain occupies 52-242 (CQDVLEKVKL…GTKLRKLILS (191 aa)). Serine 258 carries the post-translational modification Phosphoserine. The residue at position 263 (threonine 263) is a Phosphothreonine. Phosphoserine occurs at positions 266, 275, 277, 284, and 294. Polar residues-rich tracts occupy residues 278–297 (DATA…SNPK) and 306–318 (SSST…SFSS). Position 428 is a phosphoserine (serine 428). Residue threonine 438 is modified to Phosphothreonine. Residue serine 511 is modified to Phosphoserine. 2 positions are modified to phosphothreonine: threonine 517 and threonine 519. In terms of domain architecture, PI3K/PI4K catalytic spans 535–801 (EPWQEKVRRI…MVDGSMRSIT (267 aa)). The interval 541 to 547 (VRRIREG) is G-loop. A catalytic loop region spans residues 668–676 (QVKDRHNGN). An activation loop region spans residues 687–711 (HIDFGFILSSSPRNLGFETSAFKLT).

It belongs to the PI3/PI4-kinase family. Type III PI4K subfamily. In terms of assembly, interacts with ARF1 and ARF3 in the Golgi complex, but not with ARF4, ARF5 or ARF6. Interacts with NCS1/FREQ in a calcium-independent manner. Interacts with CALN1/CABP8 and CALN2/CABP7; in a calcium-dependent manner; this interaction competes with NCS1/FREQ binding. Interacts with ACBD3. Interacts with ARMH3, YWHAB, YWHAE, YWHAG, YWHAH, YWHAQ, YWHAZ and SFN. Interacts with GGA2 (via VHS domain); the interaction is important for PI4KB location at the Golgi apparatus membrane. Interacts with ATG9A. It depends on Mg(2+) as a cofactor. The cofactor is Mn(2+).

It localises to the endomembrane system. It is found in the mitochondrion outer membrane. The protein localises to the rough endoplasmic reticulum membrane. The protein resides in the golgi apparatus. Its subcellular location is the golgi apparatus membrane. The catalysed reaction is a 1,2-diacyl-sn-glycero-3-phospho-(1D-myo-inositol) + ATP = a 1,2-diacyl-sn-glycero-3-phospho-(1D-myo-inositol 4-phosphate) + ADP + H(+). With respect to regulation, inhibited by wortmannin. Increased kinase activity upon interaction with NCS1/FREQ. In terms of biological role, phosphorylates phosphatidylinositol (PI) in the first committed step in the production of the second messenger inositol-1,4,5,-trisphosphate (PIP). May regulate Golgi disintegration/reorganization during mitosis, possibly via its phosphorylation. Involved in Golgi-to-plasma membrane trafficking. This Plecturocebus moloch (Dusky titi monkey) protein is Phosphatidylinositol 4-kinase beta (PI4KB).